We begin with the raw amino-acid sequence, 578 residues long: GRAM domain-containing protein 4 (578 aa).

2 disordered regions span residues 23-58 (ESPN…AGPG) and 136-159 (TEEQ…ERRS). Ser24 and Ser28 each carry phosphoserine. Basic and acidic residues predominate over residues 44–53 (SPRDSEELRD). The stretch at 83–143 (HLEIALLEKH…ARTEEQMAQQ (61 aa)) forms a coiled coil. The next 3 helical transmembrane spans lie at 240-260 (VYMN…LAIL), 334-354 (ITQK…FFPY), and 356-376 (LVGL…DFIF). Residues 415–435 (QTTSSRSYVPSAPAGLGKEED) form a disordered region. In terms of domain architecture, GRAM spans 445 to 523 (GNFHEIFNLT…VDITDIQKYK (79 aa)).

In terms of assembly, interacts with RTN4 (isoform B). As to expression, expressed in lung and in primary lung squamous cell carcinoma (LSCC).

The protein resides in the mitochondrion membrane. Its subcellular location is the endoplasmic reticulum membrane. Functionally, plays a role as a mediator of E2F1-induced apoptosis in the absence of p53/TP53. Plays a role as a mediator of E2F1-induced apoptosis in the absence of p53/TP53. Inhibits TLR9 response to nucelic acids and regulates TLR9-mediated innate immune response. In Homo sapiens (Human), this protein is GRAM domain-containing protein 4.